Reading from the N-terminus, the 260-residue chain is Proteasome subunit alpha (260 aa).

Residues 237 to 248 show a composition bias toward low complexity; that stretch reads ASTDAPAAAADS. The segment at 237–260 is disordered; sequence ASTDAPAAAADSADVEERPDSEAP. Positions 251-260 are enriched in basic and acidic residues; it reads VEERPDSEAP.

The protein belongs to the peptidase T1A family. In terms of assembly, the 20S proteasome core is composed of 14 alpha and 14 beta subunits that assemble into four stacked heptameric rings, resulting in a barrel-shaped structure. The two inner rings, each composed of seven catalytic beta subunits, are sandwiched by two outer rings, each composed of seven alpha subunits. The catalytic chamber with the active sites is on the inside of the barrel. Has a gated structure, the ends of the cylinder being occluded by the N-termini of the alpha-subunits. Is capped by the proteasome-associated ATPase, ARC.

Its subcellular location is the cytoplasm. The protein operates within protein degradation; proteasomal Pup-dependent pathway. With respect to regulation, the formation of the proteasomal ATPase ARC-20S proteasome complex, likely via the docking of the C-termini of ARC into the intersubunit pockets in the alpha-rings, may trigger opening of the gate for substrate entry. Interconversion between the open-gate and close-gate conformations leads to a dynamic regulation of the 20S proteasome proteolysis activity. Functionally, component of the proteasome core, a large protease complex with broad specificity involved in protein degradation. The protein is Proteasome subunit alpha of Salinispora tropica (strain ATCC BAA-916 / DSM 44818 / JCM 13857 / NBRC 105044 / CNB-440).